The sequence spans 271 residues: Undecaprenyl-diphosphatase (271 aa).

The next 8 membrane-spanning stretches (helical) occupy residues 5 to 25 (LLIK…LPIS), 43 to 63 (FATM…VYYF), 80 to 100 (GFNL…IGIL), 109 to 129 (LFSP…MIVI), 145 to 165 (VSTS…FPGM), 186 to 206 (AEFS…FELV), 215 to 235 (LEWE…LIVV), and 246 to 266 (VLKP…FLIA).

Belongs to the UppP family.

The protein localises to the cell membrane. It catalyses the reaction di-trans,octa-cis-undecaprenyl diphosphate + H2O = di-trans,octa-cis-undecaprenyl phosphate + phosphate + H(+). Its function is as follows. Catalyzes the dephosphorylation of undecaprenyl diphosphate (UPP). Confers resistance to bacitracin. The chain is Undecaprenyl-diphosphatase from Caldanaerobacter subterraneus subsp. tengcongensis (strain DSM 15242 / JCM 11007 / NBRC 100824 / MB4) (Thermoanaerobacter tengcongensis).